Reading from the N-terminus, the 606-residue chain is Kelch-like protein 41 (606 aa).

Ser-3 is modified (phosphoserine). The BTB domain maps to 33 to 100; the sequence is IDCTLKAGDK…LYSASIDLND (68 aa). The region spanning 135 to 237 is the BACK domain; the sequence is CLAILRLGLL…TEKYFKDHVE (103 aa). 5 Kelch repeats span residues 346-398, 399-447, 448-495, 497-542, and 544-599; these read QIYV…EVDD, KIYV…SHKG, MIYC…VHKG, IVIA…SLAG, and LYAI…TRLN.

Interacts with NRAP. Interacts with LASP1. Part of a complex that contains CUL3, RBX1 and KLHL41. Post-translationally, ubiquitinated by E3 ubiquitin ligase complex formed by CUL3 and RBX1 and probably targeted for proteasome-independent degradation. Quinone-induced oxidative stress increases its ubiquitination. Sarcomeric muscle.

It is found in the cytoplasm. The protein resides in the cytoskeleton. It localises to the cell projection. Its subcellular location is the pseudopodium. The protein localises to the ruffle. It is found in the myofibril. The protein resides in the sarcomere. It localises to the m line. Its subcellular location is the sarcoplasmic reticulum membrane. The protein localises to the endoplasmic reticulum membrane. Functionally, involved in skeletal muscle development and differentiation. Regulates proliferation and differentiation of myoblasts and plays a role in myofibril assembly by promoting lateral fusion of adjacent thin fibrils into mature, wide myofibrils. Required for pseudopod elongation in transformed cells. In Homo sapiens (Human), this protein is Kelch-like protein 41 (KLHL41).